The chain runs to 227 residues: UPF0758 protein llmg_1515 (227 aa).

In terms of domain architecture, MPN spans 103–225; it reads QVLSSKEYGM…YYSFRERDSN (123 aa). Zn(2+)-binding residues include histidine 174, histidine 176, and aspartate 187. Residues 174-187 carry the JAMM motif motif; sequence HNHPSGNLQPSQAD.

It belongs to the UPF0758 family.

The polypeptide is UPF0758 protein llmg_1515 (Lactococcus lactis subsp. cremoris (strain MG1363)).